A 344-amino-acid polypeptide reads, in one-letter code: Probable nicotinate-nucleotide adenylyltransferase/Ap4A hydrolase (344 aa).

The naMN adenylyltransferase stretch occupies residues Met-1–Lys-182. Residues Glu-191–Asn-344 are ap4A hydrolase. Residues Arg-193–Met-304 form the HD domain. Position 196 (His-196) interacts with ADP. 3 residues coordinate Fe cation: His-196, His-225, and Asp-226. ADP-binding positions include Asp-226 to Lys-229, His-255, His-281 to Thr-282, Asp-299, and Arg-305. Asp-299 is a Fe cation binding site.

In the N-terminal section; belongs to the NadD family. The protein in the C-terminal section; belongs to the Ap4A hydrolase YqeK family.

It catalyses the reaction nicotinate beta-D-ribonucleotide + ATP + H(+) = deamido-NAD(+) + diphosphate. The catalysed reaction is P(1),P(4)-bis(5'-adenosyl) tetraphosphate + H2O = 2 ADP + 2 H(+). It participates in cofactor biosynthesis; NAD(+) biosynthesis; deamido-NAD(+) from nicotinate D-ribonucleotide: step 1/1. Functionally, catalyzes the reversible adenylation of nicotinate mononucleotide (NaMN) to nicotinic acid adenine dinucleotide (NaAD). In terms of biological role, hydrolyzes diadenosine 5',5'''-P1,P4-tetraphosphate (Ap4A) to yield ADP. This is Probable nicotinate-nucleotide adenylyltransferase/Ap4A hydrolase from Mycoplasma pneumoniae (strain ATCC 29342 / M129 / Subtype 1) (Mycoplasmoides pneumoniae).